The chain runs to 79 residues: Short neurotoxin 4 (79 aa).

The first 21 residues, 1–21 (MKTLLLTLVMVTIMCLDLGYT), serve as a signal peptide directing secretion. Disulfide bonds link cysteine 24–cysteine 41, cysteine 34–cysteine 59, and cysteine 63–cysteine 71.

This sequence belongs to the three-finger toxin family. Short-chain subfamily. Type III alpha-neurotoxin sub-subfamily. In terms of tissue distribution, expressed by the venom gland.

Its subcellular location is the secreted. In terms of biological role, binds with high affinity to muscle nicotinic acetylcholine receptor (nAChR) and hinders acetylcholine binding to the receptor, thereby impairing neuromuscular transmission. Causes muscle paralysis, spasms and increased respiration. This is Short neurotoxin 4 from Pseudonaja textilis (Eastern brown snake).